A 93-amino-acid chain; its full sequence is Small ribosomal subunit protein uS19 (93 aa).

This sequence belongs to the universal ribosomal protein uS19 family.

Functionally, protein S19 forms a complex with S13 that binds strongly to the 16S ribosomal RNA. The chain is Small ribosomal subunit protein uS19 from Brevibacillus brevis (strain 47 / JCM 6285 / NBRC 100599).